The following is a 924-amino-acid chain: MQTKGCRFFMNTEQLQKTLRSSQYAEQVLGLHQLYLEQDYQIDQFAAPLSRENIFQSVENELKDIQDESQWMRVVRILRARLMFRWIWQDANRLTNVVSLTRELSDFADACICAAKQFARAPLVAKHGEPVGYDGQIQDLIVIGMGKLGAQELNLSSDIDLIFAYDEQGETNGRKSIDVQQFCILWGQKLIYLLDHITADGFVFRVDMRLRPWGDGSALAISHMALEKYLIQHGREWERYAWIKARIISGGKHGDDLLEMTRPFVFRRYVDYSAFAAMREMKSMIEREVARRNIADDIKLGAGGIREVEFIVQVFQLIYGGSKRELQDRQCLVSLNHLGQAGLLQSQDVIELEDAYLFLRRVEHAIQALNDQQTQMLPMEPELRQRILDTLEYPTWDNFIEALNEKRHKVSEQFKKLIQEEVTSPDETDTELEQQLNAILDETAQNLVHEFWQSNALKRLPSKAVQRLKDFWPHFIEAILQSEHPQMAFMRLMPLIESVMRRTVYLVMLMESRGAMQRLVKMATVSPWICEELTQYPVLLDEFLSMDFELPQRKDLEDSLRQQLLRIEIDQVEDQMRVLRLFKKSNVLTVAASDVLAESPLMKVSDALTDIAEVSVAATLNLAYQAVVKKHGYPKDASGERCSLEHTGFAVIGYGKLGGIELGYGSDLDLVFIHYFDEQAETDGSKSITGFEFAMRVAQKFLSLMTTQTLDGRVYEIDTRLRPSGEAGLLVTSLKAFEQYQLKSAWLWEHQALVRARSIAGEAQLRQKFESLRCQILTQSRDENEVRDEVLKMRQKMKDHLGSSNEQKKHGIFHLKQDAGGIVDIEFMAQYMVLAWSGANPDLAHFSDNVRILEDAAQAGCLSSEDATALMHAYLRERAESHRLALANQSMQVNAAQWRHTREVVCKLWQRLIDPASTMALESE.

The adenylyl removase stretch occupies residues 1 to 422; the sequence is MQTKGCRFFM…QFKKLIQEEV (422 aa). The adenylyl transferase stretch occupies residues 424 to 924; the sequence is SPDETDTELE…PASTMALESE (501 aa).

It belongs to the GlnE family. Requires Mg(2+) as cofactor.

The catalysed reaction is [glutamine synthetase]-O(4)-(5'-adenylyl)-L-tyrosine + phosphate = [glutamine synthetase]-L-tyrosine + ADP. It catalyses the reaction [glutamine synthetase]-L-tyrosine + ATP = [glutamine synthetase]-O(4)-(5'-adenylyl)-L-tyrosine + diphosphate. Involved in the regulation of glutamine synthetase GlnA, a key enzyme in the process to assimilate ammonia. When cellular nitrogen levels are high, the C-terminal adenylyl transferase (AT) inactivates GlnA by covalent transfer of an adenylyl group from ATP to specific tyrosine residue of GlnA, thus reducing its activity. Conversely, when nitrogen levels are low, the N-terminal adenylyl removase (AR) activates GlnA by removing the adenylyl group by phosphorolysis, increasing its activity. The regulatory region of GlnE binds the signal transduction protein PII (GlnB) which indicates the nitrogen status of the cell. This is Bifunctional glutamine synthetase adenylyltransferase/adenylyl-removing enzyme from Acinetobacter baylyi (strain ATCC 33305 / BD413 / ADP1).